A 397-amino-acid polypeptide reads, in one-letter code: ATP-dependent RNA helicase eIF4A (397 aa).

The Q motif signature appears at 23–51; the sequence is YKFDDLNLKPNIVRGIFGYGYETPSAIQQ. The region spanning 54–224 is the Helicase ATP-binding domain; the sequence is ILPITEGRDV…TKFMNNPVRI (171 aa). Position 67–74 (67–74) interacts with ATP; sequence AQSGTGKT. Positions 172 to 175 match the DEAD box motif; the sequence is DEAD. In terms of domain architecture, Helicase C-terminal spans 235–396; sequence GIKQFYINVE…EMPADIGALF (162 aa).

This sequence belongs to the DEAD box helicase family. eIF4A subfamily. Component of the eIF4F complex, which composition varies with external and internal environmental conditions. It is composed of at least eIF4A, eIF4E and eIF4G.

The protein localises to the cytoplasm. It catalyses the reaction ATP + H2O = ADP + phosphate + H(+). Its function is as follows. ATP-dependent RNA helicase which is a subunit of the eIF4F complex involved in cap recognition and is required for mRNA binding to ribosome. In the current model of translation initiation, eIF4A unwinds RNA secondary structures in the 5'-UTR of mRNAs which is necessary to allow efficient binding of the small ribosomal subunit, and subsequent scanning for the initiator codon. The sequence is that of ATP-dependent RNA helicase eIF4A (TIF1) from Candida albicans (strain SC5314 / ATCC MYA-2876) (Yeast).